The primary structure comprises 255 residues: MNIAKIVREAREQSRLTTLDFATGIFDEFIQLHGDRSFRDDGAVVGGIGWLGDQAVTVVGIQKGKSLQDNLKRNFGQPHPEGYRKALRLMKHAEKFGRPVVTFINTAGAYPGVGAEERGQGEAIARNLMEMSDLKVPIIAIIIGEGGSGGALALAVADRVWMLENSIYAILSPEGFASILWKDGSRAMEAAELMKITSHELLEMDVVDKVISEVGLSSKELIKSVKKELQTELARLSQKPLEELLEERYQRFRKY.

The CoA carboxyltransferase C-terminal domain maps to 1-235; it reads MNIAKIVREA…KKELQTELAR (235 aa).

Belongs to the AccA family. As to quaternary structure, acetyl-CoA carboxylase is a heterohexamer composed of biotin carboxyl carrier protein (AccB), biotin carboxylase (AccC) and two subunits each of ACCase subunit alpha (AccA) and ACCase subunit beta (AccD).

It localises to the cytoplasm. It carries out the reaction N(6)-carboxybiotinyl-L-lysyl-[protein] + acetyl-CoA = N(6)-biotinyl-L-lysyl-[protein] + malonyl-CoA. It functions in the pathway lipid metabolism; malonyl-CoA biosynthesis; malonyl-CoA from acetyl-CoA: step 1/1. Its function is as follows. Component of the acetyl coenzyme A carboxylase (ACC) complex. First, biotin carboxylase catalyzes the carboxylation of biotin on its carrier protein (BCCP) and then the CO(2) group is transferred by the carboxyltransferase to acetyl-CoA to form malonyl-CoA. The polypeptide is Acetyl-coenzyme A carboxylase carboxyl transferase subunit alpha (Streptococcus pneumoniae (strain CGSP14)).